A 518-amino-acid chain; its full sequence is F-box protein At1g47056 (518 aa).

The F-box domain maps to 37–82 (PDYTSSLPDECLALVFQFLNSGNRKRCALVCRRWMIVEGQNRYRLS).

The polypeptide is F-box protein At1g47056 (Arabidopsis thaliana (Mouse-ear cress)).